Consider the following 203-residue polypeptide: Guanylate kinase (203 aa).

The region spanning 3–181 (GTLYIVAAPS…AVAEMCAIFT (179 aa)) is the Guanylate kinase-like domain. Residue 10-17 (APSGAGKS) coordinates ATP.

This sequence belongs to the guanylate kinase family.

Its subcellular location is the cytoplasm. It carries out the reaction GMP + ATP = GDP + ADP. Its function is as follows. Essential for recycling GMP and indirectly, cGMP. The polypeptide is Guanylate kinase (Xanthomonas euvesicatoria pv. vesicatoria (strain 85-10) (Xanthomonas campestris pv. vesicatoria)).